A 210-amino-acid polypeptide reads, in one-letter code: Floral homeotic protein FBP1 (210 aa).

An MADS-box domain is found at 3–57; sequence RGKIEIKRIENSSNRQVTYSKRRNGILKKAKEISVLCDARVSVIIFASSGKMHEF. Positions 82-173 constitute a K-box domain; it reads HENLDNEINK…QLEIATMNRN (92 aa).

Petals.

It is found in the nucleus. Probable transcription factor. In Petunia hybrida (Petunia), this protein is Floral homeotic protein FBP1 (FBP1).